The primary structure comprises 221 residues: Uracil-DNA glycosylase 1 (221 aa).

The active-site Proton acceptor is D61.

The protein belongs to the uracil-DNA glycosylase (UDG) superfamily. UNG family.

It localises to the cytoplasm. The enzyme catalyses Hydrolyzes single-stranded DNA or mismatched double-stranded DNA and polynucleotides, releasing free uracil.. In terms of biological role, excises uracil residues from the DNA which can arise as a result of misincorporation of dUMP residues by DNA polymerase or due to deamination of cytosine. In Listeria monocytogenes serotype 4b (strain F2365), this protein is Uracil-DNA glycosylase 1.